Here is a 915-residue protein sequence, read N- to C-terminus: Rab3 GTPase-activating protein catalytic subunit (915 aa).

The protein belongs to the Rab3-GAP catalytic subunit family. As to quaternary structure, the Rab3 GTPase-activating complex is a heterodimer composed of rbg-1 and rbg-2.

It is found in the cytoplasm. Probable catalytic subunit of a GTPase activating protein that has specificity for Rab3 subfamily. Rab3 proteins are involved in regulated exocytosis of neurotransmitters and hormones. Specifically converts active Rab3-GTP to the inactive form Rab3-GDP. The polypeptide is Rab3 GTPase-activating protein catalytic subunit (rbg-1) (Caenorhabditis elegans).